The primary structure comprises 1407 residues: ABC transporter B family member 6 (1407 aa).

The interval 18–65 is disordered; the sequence is LTPVSEVSEPPESPSPYLDPGAEHGGTGTAAQADDEEEMEEPEEMEPP. Acidic residues predominate over residues 50–63; sequence ADDEEEMEEPEEME. 4 helical membrane-spanning segments follow: residues 84 to 104, 139 to 159, 212 to 231, and 236 to 258; these read VLMV…IVYL, IVYI…CWIL, VGNY…IGFV, and IALI…NIFL. Residues 86–379 enclose the ABC transmembrane type-1 1 domain; sequence MVFGSVAAAA…AATNFYSFDQ (294 aa). Residue Asn291 is glycosylated (N-linked (GlcNAc...) asparagine). 2 helical membrane-spanning segments follow: residues 310–330 and 351–371; these read GILI…LAIC and GEII…NQAA. In terms of domain architecture, ABC transporter 1 spans 412–647; the sequence is IEFRNVYFSY…GNLYAELLKC (236 aa). 447–454 contributes to the ATP binding site; sequence GRNGSGKS. Residues Asn449 and Asn663 are each glycosylated (N-linked (GlcNAc...) asparagine). 2 disordered regions span residues 670-696 and 709-815; these read AERD…SLQR and NSEE…DGQH. N-linked (GlcNAc...) asparagine glycosylation occurs at Asn727. Residues 733–755 are compositionally biased toward basic and acidic residues; the sequence is VGEKEPTIKRQDSFEMRLPELPK. A compositionally biased stretch (polar residues) spans 761–770; it reads PQRQKSNGSD. N-linked (GlcNAc...) asparagine glycosylation occurs at Asn767. One can recognise an ABC transmembrane type-1 2 domain in the interval 835–1123; sequence AVLGSIGAAI…PFGLAPYILK (289 aa). 6 helical membrane passes run 840–860, 880–900, 958–978, 982–1002, 1061–1081, and 1102–1122; these read IGAA…ALVV, LIIA…HFYF, IFIQ…LLGW, LVAL…KLWL, IGFA…LLLW, and MVFS…PYIL. The region spanning 1158–1395 is the ABC transporter 2 domain; it reads IELKNIDFCY…NGLYVRLMQP (238 aa). A glycan (N-linked (GlcNAc...) asparagine) is linked at Asn1178. 1193–1200 lines the ATP pocket; that stretch reads GVSGSGKS. Asn1260 and Asn1346 each carry an N-linked (GlcNAc...) asparagine glycan.

The protein belongs to the ABC transporter superfamily. ABCB family. Multidrug resistance exporter (TC 3.A.1.201) subfamily. Expressed in aerial tissues.

It localises to the membrane. The catalysed reaction is (indol-3-yl)acetate(in) + ATP + H2O = (indol-3-yl)acetate(out) + ADP + phosphate + H(+). Its function is as follows. Probable auxin efflux transporter that contributes, together with ABCB20 and in a FKBP42/TWD1-dependent manner, to the regulation of leaf position and morphology, internode distribution, roots development, and inflorescence organization, probably by modulating auxin repartition. This chain is ABC transporter B family member 6, found in Arabidopsis thaliana (Mouse-ear cress).